The following is a 228-amino-acid chain: Cytochrome b6-f complex iron-sulfur subunit 2, chloroplastic (228 aa).

A chloroplast-targeting transit peptide spans 1 to 49 (MASSTLSPVTQLCSSKSGLSSVSQCLLLKPMKINSHGLGKDKRMKVKCM). The chain crosses the membrane as a helical span at residues 71–91 (LLLGALSLPTAGMLVPYATFF). A Rieske domain is found at 115 to 211 (ASEWLKTHPP…ADIDDGKVVF (97 aa)). [2Fe-2S] cluster is bound by residues Cys-157, His-159, Cys-175, and His-178. Cys-162 and Cys-177 are oxidised to a cystine.

It belongs to the Rieske iron-sulfur protein family. The 4 large subunits of the cytochrome b6-f complex are cytochrome b6, subunit IV (17 kDa polypeptide, petD), cytochrome f and the Rieske protein, while the 4 small subunits are petG, petL, petM and petN. The complex functions as a dimer. It depends on [2Fe-2S] cluster as a cofactor.

The protein localises to the plastid. The protein resides in the chloroplast thylakoid membrane. The enzyme catalyses 2 oxidized [plastocyanin] + a plastoquinol + 2 H(+)(in) = 2 reduced [plastocyanin] + a plastoquinone + 4 H(+)(out). Functionally, component of the cytochrome b6-f complex, which mediates electron transfer between photosystem II (PSII) and photosystem I (PSI), cyclic electron flow around PSI, and state transitions. This is Cytochrome b6-f complex iron-sulfur subunit 2, chloroplastic (petC2) from Nicotiana tabacum (Common tobacco).